Reading from the N-terminus, the 581-residue chain is Lipoprotein LpqB (581 aa).

Residues 1–23 (MRNHVSRYLTALIAVGCAATTAA) form the signal peptide. Residue cysteine 24 is the site of N-palmitoyl cysteine attachment. Cysteine 24 is lipidated: S-diacylglycerol cysteine.

Belongs to the LpqB lipoprotein family.

It is found in the cell membrane. This is Lipoprotein LpqB from Corynebacterium diphtheriae (strain ATCC 700971 / NCTC 13129 / Biotype gravis).